The sequence spans 217 residues: 3,4-dihydroxy-2-butanone 4-phosphate synthase (217 aa).

Residues 37-38, Asp-42, 150-154, and Glu-174 contribute to the D-ribulose 5-phosphate site; these read RE and RGGHT. Glu-38 lines the Mg(2+) pocket. Residue His-153 participates in Mg(2+) binding.

It belongs to the DHBP synthase family. Homodimer. Requires Mg(2+) as cofactor. The cofactor is Mn(2+).

The catalysed reaction is D-ribulose 5-phosphate = (2S)-2-hydroxy-3-oxobutyl phosphate + formate + H(+). Its pathway is cofactor biosynthesis; riboflavin biosynthesis; 2-hydroxy-3-oxobutyl phosphate from D-ribulose 5-phosphate: step 1/1. Functionally, catalyzes the conversion of D-ribulose 5-phosphate to formate and 3,4-dihydroxy-2-butanone 4-phosphate. This Enterobacter sp. (strain 638) protein is 3,4-dihydroxy-2-butanone 4-phosphate synthase.